The sequence spans 158 residues: MLNQLDNLTERVRGSNKLVDRWLHVRKHLLVAYYNLVGIKPGKESYMRLNEKALDDFCQSLVDYLSAGHFSIYERILHKLEGNGQLARAAKIWPQLEANTQQIMDYYDSSLETAIDHDNYLEFQQVLSDIGEALEARFVLEDKLILLVLDAARVKHPA.

This sequence belongs to the Rsd/AlgQ family. Interacts with RpoD.

The protein localises to the cytoplasm. Functionally, binds RpoD and negatively regulates RpoD-mediated transcription activation by preventing the interaction between the primary sigma factor RpoD with the catalytic core of the RNA polymerase and with promoter DNA. May be involved in replacement of the RNA polymerase sigma subunit from RpoD to RpoS during the transition from exponential growth to the stationary phase. The sequence is that of Regulator of sigma D from Escherichia coli (strain SMS-3-5 / SECEC).